We begin with the raw amino-acid sequence, 203 residues long: Hypoxanthine-guanine phosphoribosyltransferase (203 aa).

2 residues coordinate diphosphate: Lys66 and Gly67. The Mg(2+) site is built by Glu122 and Asp123. Residue Asp126 is the Proton acceptor of the active site. GMP-binding positions include Lys154, 175-176 (FV), and Asp182. Arg188 is a diphosphate binding site.

This sequence belongs to the purine/pyrimidine phosphoribosyltransferase family. It depends on Mg(2+) as a cofactor.

Its subcellular location is the cytoplasm. It catalyses the reaction IMP + diphosphate = hypoxanthine + 5-phospho-alpha-D-ribose 1-diphosphate. The enzyme catalyses GMP + diphosphate = guanine + 5-phospho-alpha-D-ribose 1-diphosphate. It functions in the pathway purine metabolism; IMP biosynthesis via salvage pathway; IMP from hypoxanthine: step 1/1. It participates in purine metabolism; GMP biosynthesis via salvage pathway; GMP from guanine: step 1/1. Functionally, purine salvage pathway enzyme that catalyzes the transfer of the ribosyl-5-phosphate group from 5-phospho-alpha-D-ribose 1-diphosphate (PRPP) to the N9 position of the 6-oxopurines hypoxanthine and guanine to form the corresponding ribonucleotides IMP (inosine 5'-monophosphate) and GMP (guanosine 5'-monophosphate), with the release of PPi. In Mycobacterium avium, this protein is Hypoxanthine-guanine phosphoribosyltransferase (hpt).